The chain runs to 271 residues: DNA-directed RNA polymerase subunit Rpo3 (271 aa).

This sequence belongs to the archaeal Rpo3/eukaryotic RPB3 RNA polymerase subunit family. In terms of assembly, part of the RNA polymerase complex.

The protein localises to the cytoplasm. It catalyses the reaction RNA(n) + a ribonucleoside 5'-triphosphate = RNA(n+1) + diphosphate. DNA-dependent RNA polymerase (RNAP) catalyzes the transcription of DNA into RNA using the four ribonucleoside triphosphates as substrates. The protein is DNA-directed RNA polymerase subunit Rpo3 of Picrophilus torridus (strain ATCC 700027 / DSM 9790 / JCM 10055 / NBRC 100828 / KAW 2/3).